Here is a 128-residue protein sequence, read N- to C-terminus: Small ribosomal subunit protein bS6 (128 aa).

The tract at residues 100–128 (SPMAKAKEERFTRRDDERREEATEAASEE) is disordered. Residues 104 to 121 (KAKEERFTRRDDERREEA) show a composition bias toward basic and acidic residues.

The protein belongs to the bacterial ribosomal protein bS6 family.

Its function is as follows. Binds together with bS18 to 16S ribosomal RNA. The sequence is that of Small ribosomal subunit protein bS6 from Aeromonas hydrophila subsp. hydrophila (strain ATCC 7966 / DSM 30187 / BCRC 13018 / CCUG 14551 / JCM 1027 / KCTC 2358 / NCIMB 9240 / NCTC 8049).